A 524-amino-acid polypeptide reads, in one-letter code: Bifunctional purine biosynthesis protein PurH (524 aa).

Positions 1–149 (MSDPVIKRAL…KNNESVTVVT (149 aa)) constitute an MGS-like domain.

Belongs to the PurH family.

It carries out the reaction (6R)-10-formyltetrahydrofolate + 5-amino-1-(5-phospho-beta-D-ribosyl)imidazole-4-carboxamide = 5-formamido-1-(5-phospho-D-ribosyl)imidazole-4-carboxamide + (6S)-5,6,7,8-tetrahydrofolate. It catalyses the reaction IMP + H2O = 5-formamido-1-(5-phospho-D-ribosyl)imidazole-4-carboxamide. It functions in the pathway purine metabolism; IMP biosynthesis via de novo pathway; 5-formamido-1-(5-phospho-D-ribosyl)imidazole-4-carboxamide from 5-amino-1-(5-phospho-D-ribosyl)imidazole-4-carboxamide (10-formyl THF route): step 1/1. The protein operates within purine metabolism; IMP biosynthesis via de novo pathway; IMP from 5-formamido-1-(5-phospho-D-ribosyl)imidazole-4-carboxamide: step 1/1. The sequence is that of Bifunctional purine biosynthesis protein PurH from Chlorobium chlorochromatii (strain CaD3).